The following is a 240-amino-acid chain: 1-(5-phosphoribosyl)-5-[(5-phosphoribosylamino)methylideneamino] imidazole-4-carboxamide isomerase (240 aa).

Aspartate 8 serves as the catalytic Proton acceptor. The Proton donor role is filled by aspartate 130.

The protein belongs to the HisA/HisF family.

The protein resides in the cytoplasm. It carries out the reaction 1-(5-phospho-beta-D-ribosyl)-5-[(5-phospho-beta-D-ribosylamino)methylideneamino]imidazole-4-carboxamide = 5-[(5-phospho-1-deoxy-D-ribulos-1-ylimino)methylamino]-1-(5-phospho-beta-D-ribosyl)imidazole-4-carboxamide. It functions in the pathway amino-acid biosynthesis; L-histidine biosynthesis; L-histidine from 5-phospho-alpha-D-ribose 1-diphosphate: step 4/9. In Elusimicrobium minutum (strain Pei191), this protein is 1-(5-phosphoribosyl)-5-[(5-phosphoribosylamino)methylideneamino] imidazole-4-carboxamide isomerase.